The sequence spans 167 residues: RNA pyrophosphohydrolase (167 aa).

Residues 8 to 158 (PYRTCVGMML…KRPVYERVVK (151 aa)) form the Nudix hydrolase domain. The Nudix box signature appears at 47-68 (GGVDPGEDTWEAAKRELYEETN).

The protein belongs to the Nudix hydrolase family. RppH subfamily. It depends on a divalent metal cation as a cofactor.

In terms of biological role, accelerates the degradation of transcripts by removing pyrophosphate from the 5'-end of triphosphorylated RNA, leading to a more labile monophosphorylated state that can stimulate subsequent ribonuclease cleavage. The polypeptide is RNA pyrophosphohydrolase (Rhodopseudomonas palustris (strain HaA2)).